The following is a 374-amino-acid chain: Growth/differentiation factor 8 (374 aa).

The N-terminal stretch at 1 to 22 (MHFTQVLISLSVLIACGPVGYG) is a signal peptide. The propeptide occupies 23–265 (DITAHQQPST…ISEGPKRIRR (243 aa)). 2 N-linked (GlcNAc...) asparagine glycosylation sites follow: Asn-72 and Asn-274. 4 cysteine pairs are disulfide-bonded: Cys-271-Cys-281, Cys-280-Cys-339, Cys-308-Cys-371, and Cys-312-Cys-373.

Belongs to the TGF-beta family. As to quaternary structure, homodimer; disulfide-linked. Predominantly expressed in muscle. At hatching, expression is strongest in the skin epithelium, and is also found in the retina and brain. From day 28, expressed in skeletal muscle. In the adult, highest expression is seen in the gastrointestinal tract, brain, muscle, heart and testis. Also expressed in the adult pharynx, kidney, spleen, liver, gill, eyes, skin, swim bladder and ovary.

It is found in the secreted. Functionally, acts specifically as a negative regulator of skeletal muscle growth. May down-regulate muscle-specific transcription factors such as myod and myog. This Danio rerio (Zebrafish) protein is Growth/differentiation factor 8 (mstnb).